Reading from the N-terminus, the 390-residue chain is Type II methyltransferase M.SacI (390 aa).

Positions 5–371 (LPVISLFSGA…RALMEQLGYL (367 aa)) constitute an SAM-dependent MTase C5-type domain. Residue C96 is part of the active site.

It belongs to the class I-like SAM-binding methyltransferase superfamily. C5-methyltransferase family.

It catalyses the reaction a 2'-deoxycytidine in DNA + S-adenosyl-L-methionine = a 5-methyl-2'-deoxycytidine in DNA + S-adenosyl-L-homocysteine + H(+). In terms of biological role, a beta methylase recognizes the double-stranded sequence 5'-GAGCTC-3', methylates C-4 on both strands, and protects the DNA from cleavage by the SacI endonuclease. The polypeptide is Type II methyltransferase M.SacI (Streptomyces achromogenes).